We begin with the raw amino-acid sequence, 388 residues long: MNEIKKKQIAILGSTGSIGTQALQVIEEHPELYEVYALTANNKVDLLIAQARKFMPEAVVIANEEKYAQLKEALSDLPVKVYAGAAALCQIVESGPIDVVLTAMVGYAGLKPTMNAIRAGKAIALANKETLVVAGELINQLARQYRTPILPVDSEHSAVFQCLAGEVGNPIEKVILTASGGPFRTCTMEQLKTVTKVQALKHPNWEMGAKITIDSASMMNKGFEVIEAKWLFGVQPSQIEVVVHPQSVIHSMVQFEDGAIKAQLGMPDMRLPIQYAFSYPDRINSSFDRLDFSKCTNLTFEQPDTKRFRNLALAYESMYRGGNMPCIVNAANEVVVAAFLRDEISFLGMSDVIEHTMGQVSFVQTPTYDDYVATDAEARRIARELICK.

Positions 15, 16, 17, 18, and 127 each coordinate NADPH. Lys128 contacts 1-deoxy-D-xylulose 5-phosphate. Glu129 provides a ligand contact to NADPH. Asp153 lines the Mn(2+) pocket. 4 residues coordinate 1-deoxy-D-xylulose 5-phosphate: Ser154, Glu155, Ser179, and His202. Position 155 (Glu155) interacts with Mn(2+). Gly208 contacts NADPH. Residues Ser215, Asn220, Lys221, and Glu224 each contribute to the 1-deoxy-D-xylulose 5-phosphate site. Glu224 contacts Mn(2+).

The protein belongs to the DXR family. Requires Mg(2+) as cofactor. It depends on Mn(2+) as a cofactor.

It carries out the reaction 2-C-methyl-D-erythritol 4-phosphate + NADP(+) = 1-deoxy-D-xylulose 5-phosphate + NADPH + H(+). It functions in the pathway isoprenoid biosynthesis; isopentenyl diphosphate biosynthesis via DXP pathway; isopentenyl diphosphate from 1-deoxy-D-xylulose 5-phosphate: step 1/6. Its function is as follows. Catalyzes the NADPH-dependent rearrangement and reduction of 1-deoxy-D-xylulose-5-phosphate (DXP) to 2-C-methyl-D-erythritol 4-phosphate (MEP). This is 1-deoxy-D-xylulose 5-phosphate reductoisomerase from Bacteroides fragilis (strain ATCC 25285 / DSM 2151 / CCUG 4856 / JCM 11019 / LMG 10263 / NCTC 9343 / Onslow / VPI 2553 / EN-2).